The sequence spans 225 residues: Ribosomal RNA small subunit methyltransferase G (225 aa).

S-adenosyl-L-methionine-binding positions include glycine 89, leucine 94, 140–141, and arginine 157; that span reads IE.

It belongs to the methyltransferase superfamily. RNA methyltransferase RsmG family.

The protein localises to the cytoplasm. The enzyme catalyses guanosine(527) in 16S rRNA + S-adenosyl-L-methionine = N(7)-methylguanosine(527) in 16S rRNA + S-adenosyl-L-homocysteine. Specifically methylates the N7 position of guanine in position 527 of 16S rRNA. The polypeptide is Ribosomal RNA small subunit methyltransferase G (Psychrobacter sp. (strain PRwf-1)).